The sequence spans 291 residues: Formamidopyrimidine-DNA glycosylase (291 aa).

The Schiff-base intermediate with DNA role is filled by proline 2. Glutamate 3 functions as the Proton donor in the catalytic mechanism. Catalysis depends on lysine 58, which acts as the Proton donor; for beta-elimination activity. DNA is bound by residues histidine 104, arginine 123, and lysine 166. Residues 257 to 291 form an FPG-type zinc finger; that stretch reads KVYDREGEPCPTCGGTVQRFVQNGRSTFWCPKCQK. Arginine 281 serves as the catalytic Proton donor; for delta-elimination activity.

Belongs to the FPG family. Monomer. Requires Zn(2+) as cofactor.

It catalyses the reaction Hydrolysis of DNA containing ring-opened 7-methylguanine residues, releasing 2,6-diamino-4-hydroxy-5-(N-methyl)formamidopyrimidine.. The catalysed reaction is 2'-deoxyribonucleotide-(2'-deoxyribose 5'-phosphate)-2'-deoxyribonucleotide-DNA = a 3'-end 2'-deoxyribonucleotide-(2,3-dehydro-2,3-deoxyribose 5'-phosphate)-DNA + a 5'-end 5'-phospho-2'-deoxyribonucleoside-DNA + H(+). Involved in base excision repair of DNA damaged by oxidation or by mutagenic agents. Acts as a DNA glycosylase that recognizes and removes damaged bases. Has a preference for oxidized purines, such as 7,8-dihydro-8-oxoguanine (8-oxoG). Has AP (apurinic/apyrimidinic) lyase activity and introduces nicks in the DNA strand. Cleaves the DNA backbone by beta-delta elimination to generate a single-strand break at the site of the removed base with both 3'- and 5'-phosphates. In Rhodopseudomonas palustris (strain ATCC BAA-98 / CGA009), this protein is Formamidopyrimidine-DNA glycosylase.